The following is an 895-amino-acid chain: Zinc finger protein 574 (895 aa).

3 C2H2-type zinc fingers span residues 16–38, 76–98, and 126–148; these read YVCS…QNSH, YQCL…QELH, and YECV…RQTH. A Phosphoserine modification is found at Ser164. The C2H2-type 4 zinc-finger motif lies at 214 to 236; sequence YKCSECSQLFQLPADFLEHQATH. The interval 239 to 301 is disordered; that stretch reads APVPESQEPA…RARRNNSGEA (63 aa). The segment covering 247–257 has biased composition (polar residues); it reads PALQQEVQASS. Positions 274-287 are enriched in basic and acidic residues; it reads HSYELRNGEAIGRD. Phosphoserine is present on Ser298. 4 C2H2-type zinc fingers span residues 309 to 331, 336 to 358, 364 to 386, and 392 to 413; these read LFCS…LRSH, FKCP…LGDH, FLCV…RRAH, and HSCP…RRTH. The tract at residues 434-460 is disordered; sequence FPEPAPAETGEPEAPEPPVSEETSAGP. 6 consecutive C2H2-type zinc fingers follow at residues 466-489, 495-517, 523-545, 551-573, 579-601, and 607-630; these read YRCL…RFVH, HKCS…LRTH, FPCP…RLTH, YRCG…RLVH, YRCQ…RYHH, and YKCR…LVVH. The C2H2-type 15; degenerate zinc finger occupies 636–659; it reads HRCPSCGAAFPSSLRLREHRCAAA. The segment at 667 to 689 adopts a C2H2-type 16 zinc-finger fold; it reads FECGTCGKKVGSAARLQAHEAAH. The tract at residues 687–732 is disordered; that stretch reads AAHAAAGPGEVLAKEPPAPRAPRATRAPVASPAALGGTATASPAPA. The segment covering 707 to 731 has biased composition (low complexity); that stretch reads APRATRAPVASPAALGGTATASPAP. Phosphoserine is present on Ser717. Thr724 is modified (phosphothreonine). Residue Ser728 is modified to Phosphoserine. 4 consecutive C2H2-type zinc fingers follow at residues 737–759, 765–787, 793–815, and 821–843; these read LECS…RRIH, YPCP…RRLH, FACE…RRIH, and YSCP…RKTH. Arg831 carries the post-translational modification Asymmetric dimethylarginine.

It belongs to the krueppel C2H2-type zinc-finger protein family.

Its subcellular location is the nucleus. Its function is as follows. May be involved in transcriptional regulation. The sequence is that of Zinc finger protein 574 (ZNF574) from Pongo abelii (Sumatran orangutan).